The sequence spans 181 residues: Organelle RRM domain-containing protein 6, chloroplastic (181 aa).

Residues 1–44 (MAISLGRVVVPSCTISGDRLFIPNFSAICSVSCGRINVGTGVIS) constitute a chloroplast transit peptide. Residues 77-155 (TKLYVSGLSF…RVIFVEEAKT (79 aa)) form the RRM domain. Residues 155–169 (TRSDMSRAKPRRDFP) are compositionally biased toward basic and acidic residues. Residues 155–181 (TRSDMSRAKPRRDFPKPQSKPRTFRTW) form a disordered region.

Interacts with MORF8/RIP1, MORF2/RIP2, MORF9/RIP9 and VAR3/OZ1.

The protein localises to the plastid. It localises to the chloroplast. Involved in C-to-U editing of chloroplastic RNA. Required for the photosynthetic subunit psbF transcript editing in chloroplast. The protein is Organelle RRM domain-containing protein 6, chloroplastic of Arabidopsis thaliana (Mouse-ear cress).